Here is a 384-residue protein sequence, read N- to C-terminus: Inactive lipoate--protein ligase 2 (384 aa).

One can recognise a BPL/LPL catalytic domain in the interval 79 to 303 (NESKGNECIF…HIKHIINYKN (225 aa)).

It is found in the mitochondrion. The protein resides in the plastid. Its subcellular location is the apicoplast. Its function is as follows. In the mitochondrion and together with LipL1, involved in the lipoylation of the E2 component of the branched chain alpha-ketoacid dehydrogenase complex BCKDH-E2/BCDH and the E2 component of the alpha -ketoglutarate dehydrogenase complex KDH. LipL1 is responsible for catalysing the activation of lipoate, forming lipoyl-AMP while LipL2 is required but is not capable of catalyzing this reaction. Although its role is unclear, it may catalyze the transfer of lipoyl groups from lipoyl-AMP to BCDH and KDH or act as an effector protein. This chain is Inactive lipoate--protein ligase 2, found in Plasmodium falciparum (isolate 3D7).